The chain runs to 249 residues: Precorrin-4 C(11)-methyltransferase (249 aa).

It belongs to the precorrin methyltransferase family.

The catalysed reaction is precorrin-4 + S-adenosyl-L-methionine = precorrin-5 + S-adenosyl-L-homocysteine. Its pathway is cofactor biosynthesis; adenosylcobalamin biosynthesis; cob(II)yrinate a,c-diamide from precorrin-2 (aerobic route): step 4/10. In terms of biological role, catalyzes the methylation of C-11 in precorrin-4 to form precorrin-5. This chain is Precorrin-4 C(11)-methyltransferase (cobM), found in Rhodococcus erythropolis (Arthrobacter picolinophilus).